A 1087-amino-acid polypeptide reads, in one-letter code: Platelet-derived growth factor receptor alpha (1087 aa).

Residues 1 to 23 (MGTPPRTFLILGCFLTGPLLTLC) form the signal peptide. Residues 24 to 528 (QLPLPTIVPN…PTLRSELTVA (505 aa)) are Extracellular-facing. 5 Ig-like C2-type domains span residues 26–104 (PLPT…YNHT), 116–208 (IYIY…IYIL), 213–312 (QLPV…VHDK), 314–411 (FIHL…SLLI), and 414–517 (PALI…LKLV). N-linked (GlcNAc...) asparagine glycosylation is found at Asn-44, Asn-75, Asn-88, and Asn-102. Cysteines 49 and 99 form a disulfide. Cystine bridges form between Cys-149-Cys-189 and Cys-235-Cys-290. Asn-353, Asn-359, Asn-458, and Asn-468 each carry an N-linked (GlcNAc...) asparagine glycan. Cys-435 and Cys-501 form a disulfide bridge. Residues 529–549 (AAVLVLLVIVIISLIVLVIIW) traverse the membrane as a helical segment. At 550-1087 (KQKPRYEIRW…SSDLVEDSFL (538 aa)) the chain is on the cytoplasmic side. A phosphotyrosine; by autocatalysis mark is found at Tyr-572 and Tyr-574. One can recognise a Protein kinase domain in the interval 593–954 (LVLGRILGSG…HLSEIVESLL (362 aa)). Residues 599-607 (LGSGAFGKV) and Lys-627 each bind ATP. 6 positions are modified to phosphotyrosine; by autocatalysis: Tyr-720, Tyr-731, Tyr-742, Tyr-754, Tyr-762, and Tyr-768. Asp-818 acts as the Proton acceptor in catalysis. Residues Tyr-849 and Tyr-988 each carry the phosphotyrosine; by autocatalysis modification. A compositionally biased stretch (basic and acidic residues) spans 1000–1011 (KDRESGFDEQRL). The segment at 1000-1059 (KDRESGFDEQRLSADSGYITPLPDIDPVSEDELGKRNRHSSQTSEESAIETGSSSSTFIK) is disordered. Tyr-1017 carries the post-translational modification Phosphotyrosine; by autocatalysis. A compositionally biased stretch (polar residues) spans 1039-1057 (SSQTSEESAIETGSSSSTF).

This sequence belongs to the protein kinase superfamily. Tyr protein kinase family. CSF-1/PDGF receptor subfamily. In terms of assembly, interacts with homodimeric PDGFA, PDGFB and PDGFC, and with heterodimers formed by PDGFA and PDGFB. Monomer in the absence of bound ligand. Interaction with dimeric PDGFA, PDGFB and/or PDGFC leads to receptor dimerization, where both PDGFRA homodimers and heterodimers with PDGFRB are observed. Post-translationally, ubiquitinated, leading to its internalization and degradation. In terms of processing, autophosphorylated on tyrosine residues upon ligand binding. Autophosphorylation occurs in trans, i.e. one subunit of the dimeric receptor phosphorylates tyrosine residues on the other subunit.

It is found in the cell membrane. Its subcellular location is the cell projection. The protein resides in the cilium. It localises to the golgi apparatus. The enzyme catalyses L-tyrosyl-[protein] + ATP = O-phospho-L-tyrosyl-[protein] + ADP + H(+). With respect to regulation, present in an inactive conformation in the absence of bound ligand. Binding of PDGFA and/or PDGFB leads to dimerization and activation by autophosphorylation on tyrosine residues. In terms of biological role, tyrosine-protein kinase that acts as a cell-surface receptor for PDGFA, PDGFB and PDGFC and plays an essential role in the regulation of embryonic development, cell proliferation, survival and chemotaxis. Depending on the context, promotes or inhibits cell proliferation and cell migration. Plays an important role in the differentiation of bone marrow-derived mesenchymal stem cells. Required for normal skeleton development. Required for normal development of the gastrointestinal tract. Plays a role in cell migration and chemotaxis in wound healing. Plays a role in platelet activation, secretion of agonists from platelet granules, and in thrombin-induced platelet aggregation. Binding of its cognate ligands - homodimeric PDGFA, homodimeric PDGFB, heterodimers formed by PDGFA and PDGFB or homodimeric PDGFC -leads to the activation of several signaling cascades; the response depends on the nature of the bound ligand and is modulated by the formation of heterodimers between PDGFRA and PDGFRB. Phosphorylates PIK3R1, PLCG1, and PTPN11. Activation of PLCG1 leads to the production of the cellular signaling molecules diacylglycerol and inositol 1,4,5-trisphosphate, mobilization of cytosolic Ca(2+) and the activation of protein kinase C. Phosphorylates PIK3R1, the regulatory subunit of phosphatidylinositol 3-kinase, and thereby mediates activation of the AKT1 signaling pathway. Mediates activation of HRAS and of the MAP kinases MAPK1/ERK2 and/or MAPK3/ERK1. Promotes activation of STAT family members STAT1, STAT3 and STAT5A and/or STAT5B. Receptor signaling is down-regulated by protein phosphatases that dephosphorylate the receptor and its down-stream effectors, and by rapid internalization of the activated receptor. In Gallus gallus (Chicken), this protein is Platelet-derived growth factor receptor alpha (PDGFRA).